Here is a 251-residue protein sequence, read N- to C-terminus: Putative deaminase AgaI (251 aa).

Aspartate 86 acts as the Proton acceptor; for enolization step in catalysis. The active-site For ring-opening step is the asparagine 154. The active-site Proton acceptor; for ring-opening step is the histidine 156. The active-site For ring-opening step is the glutamate 161.

This sequence belongs to the glucosamine/galactosamine-6-phosphate isomerase family.

The protein is Putative deaminase AgaI (agaI) of Escherichia coli (strain K12).